Reading from the N-terminus, the 288-residue chain is Phosphopantetheinyl transferase (288 aa).

CoA contacts are provided by residues R60, 99-104 (RTEMGK), and 118-121 (NLSH). Mg(2+) is bound by residues D139 and E196. Residue 196–200 (EAYLK) coordinates CoA.

The protein belongs to the P-Pant transferase superfamily. AcpS family. In terms of assembly, monomer.

Its subcellular location is the cytoplasm. It is found in the cytosol. It carries out the reaction apo-[ACP] + CoA = holo-[ACP] + adenosine 3',5'-bisphosphate + H(+). Its pathway is lipid metabolism; fatty acid biosynthesis. Phosphopantetheinyl transferase that is essential for attaching phosphopantetheine to ACP domains of the polyunsaturated fatty acid (PUFA) synthase converting the inactive apo-synthase to the active holo-synthase. The protein is Phosphopantetheinyl transferase of Thraustochytrium sp. (strain ATCC 26185 / S-3).